Reading from the N-terminus, the 108-residue chain is UPF0060 membrane protein DSY4629 (108 aa).

4 helical membrane passes run 5–25 (IILF…VWLW), 31–51 (PFWY…IPTL), 60–80 (VYAA…WGID), and 86–106 (NYDW…LWAP).

Belongs to the UPF0060 family.

The protein resides in the cell membrane. This is UPF0060 membrane protein DSY4629 from Desulfitobacterium hafniense (strain Y51).